The chain runs to 343 residues: Glucokinase (343 aa).

18–23 (GDIGGT) contacts ATP.

It belongs to the bacterial glucokinase family.

It is found in the cytoplasm. The catalysed reaction is D-glucose + ATP = D-glucose 6-phosphate + ADP + H(+). The polypeptide is Glucokinase (Brucella melitensis biotype 1 (strain ATCC 23456 / CCUG 17765 / NCTC 10094 / 16M)).